The primary structure comprises 418 residues: Histidine--tRNA ligase (418 aa).

Belongs to the class-II aminoacyl-tRNA synthetase family.

Its subcellular location is the cytoplasm. The catalysed reaction is tRNA(His) + L-histidine + ATP = L-histidyl-tRNA(His) + AMP + diphosphate + H(+). This Methanococcus aeolicus (strain ATCC BAA-1280 / DSM 17508 / OCM 812 / Nankai-3) protein is Histidine--tRNA ligase.